Here is a 78-residue protein sequence, read N- to C-terminus: DNA-directed RNA polymerase subunit Rpo5 (78 aa).

Belongs to the archaeal Rpo5/eukaryotic RPB5 RNA polymerase subunit family. As to quaternary structure, part of the RNA polymerase complex.

It is found in the cytoplasm. The catalysed reaction is RNA(n) + a ribonucleoside 5'-triphosphate = RNA(n+1) + diphosphate. DNA-dependent RNA polymerase (RNAP) catalyzes the transcription of DNA into RNA using the four ribonucleoside triphosphates as substrates. The chain is DNA-directed RNA polymerase subunit Rpo5 from Methanococcus maripaludis (strain C6 / ATCC BAA-1332).